The primary structure comprises 91 residues: Elongation factor 1-beta (91 aa).

This sequence belongs to the EF-1-beta/EF-1-delta family.

Functionally, promotes the exchange of GDP for GTP in EF-1-alpha/GDP, thus allowing the regeneration of EF-1-alpha/GTP that could then be used to form the ternary complex EF-1-alpha/GTP/AAtRNA. This Pyrococcus horikoshii (strain ATCC 700860 / DSM 12428 / JCM 9974 / NBRC 100139 / OT-3) protein is Elongation factor 1-beta (ef1b).